Consider the following 172-residue polypeptide: R-phycocyanin beta subunit (172 aa).

At Asn72 the chain carries N4-methylasparagine. Cys82 is a binding site for (2R,3E)-phycocyanobilin. Residue Cys153 participates in (2R,3E)-phycoerythrobilin binding.

The protein belongs to the phycobiliprotein family. Heterodimer of an alpha and a beta subunit, which further assembles into trimers and the trimers into hexamers. In terms of processing, contains two covalently linked bilin chromophores.

The protein resides in the cellular thylakoid membrane. Functionally, light-harvesting photosynthetic bile pigment-protein from the phycobiliprotein complex (phycobilisome, PBS). Phycocyanin is the major phycobiliprotein in the PBS rod. The chain is R-phycocyanin beta subunit (rpcB) from Synechococcus sp. (strain WH7803).